Here is a 338-residue protein sequence, read N- to C-terminus: UDP-3-O-acylglucosamine N-acyltransferase (338 aa).

The active-site Proton acceptor is His-239.

This sequence belongs to the transferase hexapeptide repeat family. LpxD subfamily. In terms of assembly, homotrimer.

It carries out the reaction a UDP-3-O-[(3R)-3-hydroxyacyl]-alpha-D-glucosamine + a (3R)-hydroxyacyl-[ACP] = a UDP-2-N,3-O-bis[(3R)-3-hydroxyacyl]-alpha-D-glucosamine + holo-[ACP] + H(+). It functions in the pathway bacterial outer membrane biogenesis; LPS lipid A biosynthesis. Functionally, catalyzes the N-acylation of UDP-3-O-acylglucosamine using 3-hydroxyacyl-ACP as the acyl donor. Is involved in the biosynthesis of lipid A, a phosphorylated glycolipid that anchors the lipopolysaccharide to the outer membrane of the cell. The polypeptide is UDP-3-O-acylglucosamine N-acyltransferase (Xylella fastidiosa (strain M12)).